We begin with the raw amino-acid sequence, 513 residues long: GMP synthase [glutamine-hydrolyzing] (513 aa).

Positions 3–200 constitute a Glutamine amidotransferase type-1 domain; that stretch reads SVTVLDFGSQ…LIDIAGIKPD (198 aa). Catalysis depends on C80, which acts as the Nucleophile. Residues H174 and E176 contribute to the active site. A GMPS ATP-PPase domain is found at 201 to 388; it reads WSPKSFIGHQ…LGIAEDILMR (188 aa). 228-234 provides a ligand contact to ATP; that stretch reads SGGVDST.

In terms of assembly, homodimer.

The enzyme catalyses XMP + L-glutamine + ATP + H2O = GMP + L-glutamate + AMP + diphosphate + 2 H(+). Its pathway is purine metabolism; GMP biosynthesis; GMP from XMP (L-Gln route): step 1/1. In terms of biological role, catalyzes the synthesis of GMP from XMP. The chain is GMP synthase [glutamine-hydrolyzing] from Chlorobium phaeobacteroides (strain DSM 266 / SMG 266 / 2430).